Consider the following 471-residue polypeptide: F-box only protein 3 (471 aa).

The F-box domain occupies 10–56 (PLTLESLPTDPLLLILSFLDYRDLINCCYVSRRLSQLSSHDPLWRRH). The ApaG domain occupies 278–408 (VATTGDITVS…FHMACPTFRV (131 aa)). Positions 419–451 (EYEEMEEEEEEEEEEDEDDDSADMDESDEDDEE) are enriched in acidic residues. The segment at 419-455 (EYEEMEEEEEEEEEEDEDDDSADMDESDEDDEEERRR) is disordered.

As to quaternary structure, part of a SCF (SKP1-cullin-F-box) protein ligase complex SCF(FBXO3) consisting of FBXO3, SKP1, CUL1 and RBX1. Interacts with PML, interaction is direct and takes place either alone or within the SCF complex. (Microbial infection) Interacts (via ApaG domain) with Rift valley fever virus NSs helical filament; this interaction forms a filamentous E3 which mediates degradation of TFIIH complex through interaction with GT2H1.

The protein resides in the nucleus. It participates in protein modification; protein ubiquitination. Substrate recognition component of the SCF (SKP1-CUL1-F-box protein)-type E3 ubiquitin ligase complex, SCF(FBXO3), which mediates the ubiquitination and subsequent proteasomal degradation of target proteins. Mediates the ubiquitination of HIPK2 and probably that of EP300, leading to rapid degradation by the proteasome. In the presence of PML, HIPK2 ubiquitination still occurs, but degradation is prevented. PML, HIPK2 and FBXO3 may act synergically to activate p53/TP53-dependent transactivation. The SCF(FBXO3) also acts as a regulator of inflammation by mediating ubiquitination and degradation of FBXL2 in response to lipopolysaccharide (LPS). The SCF(FBXO3) complex specifically recognizes FBXL2 phosphorylated at 'Thr-404' and promotes its ubiquitination. Functionally, (Microbial infection) Associates with the Rift valley fever virus NSs to form a remodeled E3 ligase that triggers efficient proteasomal degradation of targeted proteins. The filamentous E3 ligase targets the TFIIH complex leading to robust inhibition of antiviral immunity and enhances viral pathogenesis. This chain is F-box only protein 3, found in Homo sapiens (Human).